The sequence spans 24 residues: Attacin (24 aa).

This sequence belongs to the attacin/sarcotoxin-2 family.

It localises to the secreted. Hemolymph antibacterial protein. This chain is Attacin, found in Heliothis virescens (Tobacco budworm moth).